Consider the following 102-residue polypeptide: Large ribosomal subunit protein uL24c (102 aa).

This sequence belongs to the universal ribosomal protein uL24 family. As to quaternary structure, part of the 50S ribosomal subunit.

The protein localises to the plastid. Its subcellular location is the chloroplast. Functionally, one of two assembly initiator proteins, it binds directly to the 5'-end of the 23S rRNA, where it nucleates assembly of the 50S subunit. This is Large ribosomal subunit protein uL24c (rpl24) from Rhodomonas salina (Cryptomonas salina).